Reading from the N-terminus, the 215-residue chain is Thiamine import ATP-binding protein ThiQ (215 aa).

Residues 2-215 enclose the ABC transporter domain; that stretch reads IYLNNVILND…GQISQLQKGV (214 aa). 32 to 39 contacts ATP; it reads GESGAGKS.

The protein belongs to the ABC transporter superfamily. Thiamine importer (TC 3.A.1.19.1) family. The complex is composed of two ATP-binding proteins (ThiQ), two transmembrane proteins (ThiP) and a solute-binding protein (ThiB).

It localises to the cell inner membrane. The catalysed reaction is thiamine(out) + ATP + H2O = thiamine(in) + ADP + phosphate + H(+). In terms of biological role, part of the ABC transporter complex ThiBPQ involved in thiamine import. Responsible for energy coupling to the transport system. The protein is Thiamine import ATP-binding protein ThiQ of Haemophilus influenzae (strain 86-028NP).